Consider the following 257-residue polypeptide: Hydroxyacylglutathione hydrolase (257 aa).

Positions 54, 56, 58, 59, 109, 129, and 167 each coordinate Zn(2+).

The protein belongs to the metallo-beta-lactamase superfamily. Glyoxalase II family. As to quaternary structure, monomer. Zn(2+) serves as cofactor.

It carries out the reaction an S-(2-hydroxyacyl)glutathione + H2O = a 2-hydroxy carboxylate + glutathione + H(+). The protein operates within secondary metabolite metabolism; methylglyoxal degradation; (R)-lactate from methylglyoxal: step 2/2. Functionally, thiolesterase that catalyzes the hydrolysis of S-D-lactoyl-glutathione to form glutathione and D-lactic acid. The sequence is that of Hydroxyacylglutathione hydrolase from Marinomonas sp. (strain MWYL1).